The primary structure comprises 155 residues: MSQVILDLQLACEDNSGLPEESQFQTWLNAVIPQFQEESEVTIRVVDTAESHSLNLTYRGKDKPTNVLSFPFEVPPGMEMSLLGDLVICRQVVEKEAQEQGKPLEAHWAHMVVHGSLHLLGYDHIEDDEAEEMEAIETEIMLALGYEDPYIAEKE.

H114, H118, and H124 together coordinate Zn(2+).

The protein belongs to the endoribonuclease YbeY family. Requires Zn(2+) as cofactor.

The protein localises to the cytoplasm. Its function is as follows. Single strand-specific metallo-endoribonuclease involved in late-stage 70S ribosome quality control and in maturation of the 3' terminus of the 16S rRNA. This is Endoribonuclease YbeY from Escherichia coli O6:K15:H31 (strain 536 / UPEC).